A 1489-amino-acid chain; its full sequence is Ras GTPase-activating-like protein rng2 (1489 aa).

The Calponin-homology (CH) domain occupies 41 to 147 (LCRVDEAKKW…YCIHALSYFL (107 aa)). 6 consecutive IQ domains span residues 359–388 (QSSS…AYDE), 389–418 (LVNW…QEEA), 418–449 (ATKS…DLFT), 535–564 (ELDN…KLKA), 565–594 (STSS…SFQK), and 655–684 (FIPE…NFHK). Residues 734-770 (EEEVLLEKMRKEIVQQVRDNEEIEVHINELDVKIALL) are a coiled coil. One can recognise a Ras-GAP domain in the interval 870–1110 (VLLLRFISQV…QDTMLMLERL (241 aa)). Positions 1330–1364 (QSLLNLREKRAFLDSQLKSYNEYIEQAMETLQSKK) form a coiled coil.

Interacts with calmodulin cam1.

The protein localises to the cytoplasm. It is found in the cytoskeleton. Its subcellular location is the nucleus envelope. It localises to the microtubule organizing center. The protein resides in the spindle pole body. Component of the contractile F-actin ring; required for its construction following assembly of F-actin at the division site. This chain is Ras GTPase-activating-like protein rng2, found in Schizosaccharomyces pombe (strain 972 / ATCC 24843) (Fission yeast).